A 433-amino-acid polypeptide reads, in one-letter code: uncharacterized protein (433 aa).

Positions 61 to 178 (RFNHSLGVYE…QIDADRMDYL (118 aa)) constitute an HD domain.

This is an uncharacterized protein from Bacillus subtilis (strain 168).